A 339-amino-acid chain; its full sequence is Probable scoulerine-9-O-methyltransferase OMT3B (339 aa).

Position 161 (Met-161) interacts with S-adenosyl-L-methionine. Position 164 (Asp-164) interacts with substrate. S-adenosyl-L-methionine contacts are provided by residues Thr-165, Gly-191, Asp-214, 228–229, and Lys-242; that span reads DV. 243–247 serves as a coordination point for substrate; that stretch reads SILHE. His-246 serves as the catalytic Proton acceptor.

The protein belongs to the class I-like SAM-binding methyltransferase superfamily. Cation-independent O-methyltransferase family. COMT subfamily.

The enzyme catalyses (S)-scoulerine + S-adenosyl-L-methionine = (S)-tetrahydrocolumbamine + S-adenosyl-L-homocysteine + H(+). Its pathway is alkaloid biosynthesis. In terms of biological role, methyltransferase involved in the biosynthesis of the benzylisoquinoline alkaloid noscapine. Catalyzes the conversion of (S)-scoulerine to (S)-tetrahydrocolumbamine. The polypeptide is Probable scoulerine-9-O-methyltransferase OMT3B (Papaver somniferum (Opium poppy)).